Consider the following 151-residue polypeptide: MAELKDQLSLLGRKTEYKQDYAPEVLEAFDNKHPENDYWVRFNCPEFTSLCPITGQPDFAEIRISYIPDIKMVESKSLKLYLFSFRNHGAFHEDCVNIIMKDLIKLMNPKYIEVTGIFTPRGGISIYPYANYGRPGTKFEQMAEHRLMNRE.

Cys51 (thioimide intermediate) is an active-site residue. The active-site Proton donor is the Asp58. Substrate contacts are provided by residues 73–75 (VES) and 92–93 (HE).

The protein belongs to the GTP cyclohydrolase I family. QueF type 1 subfamily.

It localises to the cytoplasm. It carries out the reaction 7-aminomethyl-7-carbaguanine + 2 NADP(+) = 7-cyano-7-deazaguanine + 2 NADPH + 3 H(+). Its pathway is tRNA modification; tRNA-queuosine biosynthesis. Its function is as follows. Catalyzes the NADPH-dependent reduction of 7-cyano-7-deazaguanine (preQ0) to 7-aminomethyl-7-deazaguanine (preQ1). This Bacteroides thetaiotaomicron (strain ATCC 29148 / DSM 2079 / JCM 5827 / CCUG 10774 / NCTC 10582 / VPI-5482 / E50) protein is NADPH-dependent 7-cyano-7-deazaguanine reductase.